Consider the following 369-residue polypeptide: Succinyl-diaminopimelate desuccinylase (369 aa).

His77 contacts Zn(2+). Asp79 is an active-site residue. Residue Asp103 coordinates Zn(2+). The Proton acceptor role is filled by Glu136. Positions 137, 165, and 345 each coordinate Zn(2+).

The protein belongs to the peptidase M20A family. Zn(2+) serves as cofactor. It depends on Co(2+) as a cofactor.

It catalyses the reaction N-succinyl-(2S,6S)-2,6-diaminopimelate + H2O = (2S,6S)-2,6-diaminopimelate + succinate. The protein operates within amino-acid biosynthesis; L-lysine biosynthesis via DAP pathway; LL-2,6-diaminopimelate from (S)-tetrahydrodipicolinate (succinylase route): step 3/3. The polypeptide is Succinyl-diaminopimelate desuccinylase (dapE) (Corynebacterium glutamicum (strain ATCC 13032 / DSM 20300 / JCM 1318 / BCRC 11384 / CCUG 27702 / LMG 3730 / NBRC 12168 / NCIMB 10025 / NRRL B-2784 / 534)).